The following is a 721-amino-acid chain: Catalase-peroxidase (721 aa).

Residues 89 to 212 constitute a cross-link (tryptophyl-tyrosyl-methioninium (Trp-Tyr) (with M-238)); that stretch reads WHSAGTYRTG…LAAVQMGLIY (124 aa). The active-site Proton acceptor is the histidine 90. A cross-link (tryptophyl-tyrosyl-methioninium (Tyr-Met) (with W-89)) is located at residues 212-238; the sequence is YVNPEGPNGDPDPFAAAVDIRETFARM. Histidine 253 is a binding site for heme b.

Belongs to the peroxidase family. Peroxidase/catalase subfamily. In terms of assembly, homodimer or homotetramer. Requires heme b as cofactor. In terms of processing, formation of the three residue Trp-Tyr-Met cross-link is important for the catalase, but not the peroxidase activity of the enzyme.

It carries out the reaction H2O2 + AH2 = A + 2 H2O. It catalyses the reaction 2 H2O2 = O2 + 2 H2O. In terms of biological role, bifunctional enzyme with both catalase and broad-spectrum peroxidase activity. The sequence is that of Catalase-peroxidase from Shewanella baltica (strain OS195).